Here is a 1177-residue protein sequence, read N- to C-terminus: DNA-directed RNA polymerase subunit beta (1177 aa).

Residues 1147–1161 (DDTEIEMRDTEDDDD) show a composition bias toward acidic residues. The disordered stretch occupies residues 1147 to 1177 (DDTEIEMRDTEDDDDHQSADKLNVEVETTKE). The span at 1162–1177 (HQSADKLNVEVETTKE) shows a compositional bias: basic and acidic residues.

This sequence belongs to the RNA polymerase beta chain family. The RNAP catalytic core consists of 2 alpha, 1 beta, 1 beta' and 1 omega subunit. When a sigma factor is associated with the core the holoenzyme is formed, which can initiate transcription.

The catalysed reaction is RNA(n) + a ribonucleoside 5'-triphosphate = RNA(n+1) + diphosphate. In terms of biological role, DNA-dependent RNA polymerase catalyzes the transcription of DNA into RNA using the four ribonucleoside triphosphates as substrates. The polypeptide is DNA-directed RNA polymerase subunit beta (Bacillus thuringiensis (strain Al Hakam)).